The primary structure comprises 358 residues: Type II restriction enzyme SacI (358 aa).

The enzyme catalyses Endonucleolytic cleavage of DNA to give specific double-stranded fragments with terminal 5'-phosphates.. Its function is as follows. A subtype P restriction enzyme that recognizes the double-stranded sequence 5'-GAGCTC-3' and cleaves after T-5. This chain is Type II restriction enzyme SacI, found in Streptomyces achromogenes.